Here is a 428-residue protein sequence, read N- to C-terminus: Glutamate-1-semialdehyde 2,1-aminomutase (428 aa).

K267 is subject to N6-(pyridoxal phosphate)lysine.

This sequence belongs to the class-III pyridoxal-phosphate-dependent aminotransferase family. HemL subfamily. Homodimer. Pyridoxal 5'-phosphate is required as a cofactor.

The protein resides in the cytoplasm. It carries out the reaction (S)-4-amino-5-oxopentanoate = 5-aminolevulinate. It participates in porphyrin-containing compound metabolism; protoporphyrin-IX biosynthesis; 5-aminolevulinate from L-glutamyl-tRNA(Glu): step 2/2. Its pathway is porphyrin-containing compound metabolism; chlorophyll biosynthesis. This is Glutamate-1-semialdehyde 2,1-aminomutase from Prochlorococcus marinus (strain NATL1A).